The chain runs to 427 residues: Serine hydroxymethyltransferase (427 aa).

120–122 (GHI) serves as a coordination point for (6S)-5,6,7,8-tetrahydrofolate. Lysine 226 carries the post-translational modification N6-(pyridoxal phosphate)lysine.

The protein belongs to the SHMT family. As to quaternary structure, homodimer. It depends on pyridoxal 5'-phosphate as a cofactor.

The protein resides in the cytoplasm. It participates in amino-acid biosynthesis; glycine biosynthesis; glycine from L-serine: step 1/1. Functionally, catalyzes the reversible interconversion of serine and glycine with a modified folate serving as the one-carbon carrier. Also exhibits a pteridine-independent aldolase activity toward beta-hydroxyamino acids, producing glycine and aldehydes, via a retro-aldol mechanism. The polypeptide is Serine hydroxymethyltransferase (Pyrococcus furiosus (strain ATCC 43587 / DSM 3638 / JCM 8422 / Vc1)).